The following is a 181-amino-acid chain: Peptide deformylase 1 (181 aa).

The Fe cation site is built by Cys-106 and His-148. Glu-149 is a catalytic residue. His-152 lines the Fe cation pocket.

The protein belongs to the polypeptide deformylase family. Fe(2+) serves as cofactor.

The enzyme catalyses N-terminal N-formyl-L-methionyl-[peptide] + H2O = N-terminal L-methionyl-[peptide] + formate. Its function is as follows. Removes the formyl group from the N-terminal Met of newly synthesized proteins. Requires at least a dipeptide for an efficient rate of reaction. N-terminal L-methionine is a prerequisite for activity but the enzyme has broad specificity at other positions. The sequence is that of Peptide deformylase 1 from Burkholderia multivorans (strain ATCC 17616 / 249).